Reading from the N-terminus, the 346-residue chain is Probable aldo-keto reductase 2 (346 aa).

Y63 functions as the Proton donor in the catalytic mechanism. Position 131 (H131) interacts with substrate. 210 to 220 (SPLGRGFLAAG) provides a ligand contact to NADP(+).

It belongs to the aldo/keto reductase family. Aldo/keto reductase 13 subfamily.

The chain is Probable aldo-keto reductase 2 (AGD2) from Arabidopsis thaliana (Mouse-ear cress).